The chain runs to 103 residues: Integration host factor subunit alpha (103 aa).

The protein belongs to the bacterial histone-like protein family. Heterodimer of an alpha and a beta chain.

Functionally, this protein is one of the two subunits of integration host factor, a specific DNA-binding protein that functions in genetic recombination as well as in transcriptional and translational control. In Aromatoleum aromaticum (strain DSM 19018 / LMG 30748 / EbN1) (Azoarcus sp. (strain EbN1)), this protein is Integration host factor subunit alpha.